We begin with the raw amino-acid sequence, 114 residues long: UPF0102 protein Shew_0226 (114 aa).

Belongs to the UPF0102 family.

In Shewanella loihica (strain ATCC BAA-1088 / PV-4), this protein is UPF0102 protein Shew_0226.